A 257-amino-acid chain; its full sequence is MDRIIEKLDHGWWVVSHEQKLWLPKGELPYGEAANFDLVGQRALQIGEWQGEPVWLVQLQRRHDMGSVRQVIDLDVGLFQLAGRGVQLAEFYRSHKYCGYCGHEMYPSKTEWAMLCSHCRERYYPQIAPCIIVAIRRDDSILLAQHTRHRNGVHTVLAGFVEVGETLEQAVAREVMEESGIKVKNLRYVTSQPWPFPQSLMTAFMAEYDSGEIVIDPKELLEAHWYRYDDLPLLPPPGTVARRLIEDTVAMCRAEYE.

Residues Lys-25 and Arg-69 each contribute to the substrate site. The Zn(2+) site is built by Cys-98 and Cys-101. Position 111 (Glu-111) interacts with substrate. Zn(2+)-binding residues include Cys-116 and Cys-119. Substrate is bound at residue Tyr-124. In terms of domain architecture, Nudix hydrolase spans 125–248; that stretch reads PQIAPCIIVA…TVARRLIEDT (124 aa). Residues Ala-158, Glu-174, and Glu-178 each coordinate a divalent metal cation. The short motif at 159 to 180 is the Nudix box element; that stretch reads GFVEVGETLEQAVAREVMEESG. 192-199 lines the substrate pocket; sequence QPWPFPQS. Residue Glu-219 participates in a divalent metal cation binding. Ala-241 serves as a coordination point for substrate.

Belongs to the Nudix hydrolase family. NudC subfamily. As to quaternary structure, homodimer. The cofactor is Mg(2+). It depends on Mn(2+) as a cofactor. Zn(2+) is required as a cofactor.

The catalysed reaction is a 5'-end NAD(+)-phospho-ribonucleoside in mRNA + H2O = a 5'-end phospho-adenosine-phospho-ribonucleoside in mRNA + beta-nicotinamide D-ribonucleotide + 2 H(+). The enzyme catalyses NAD(+) + H2O = beta-nicotinamide D-ribonucleotide + AMP + 2 H(+). It catalyses the reaction NADH + H2O = reduced beta-nicotinamide D-ribonucleotide + AMP + 2 H(+). In terms of biological role, mRNA decapping enzyme that specifically removes the nicotinamide adenine dinucleotide (NAD) cap from a subset of mRNAs by hydrolyzing the diphosphate linkage to produce nicotinamide mononucleotide (NMN) and 5' monophosphate mRNA. The NAD-cap is present at the 5'-end of some mRNAs and stabilizes RNA against 5'-processing. Has preference for mRNAs with a 5'-end purine. Catalyzes the hydrolysis of a broad range of dinucleotide pyrophosphates. This Escherichia coli O45:K1 (strain S88 / ExPEC) protein is NAD-capped RNA hydrolase NudC.